Here is a 356-residue protein sequence, read N- to C-terminus: UDP-3-O-acylglucosamine N-acyltransferase (356 aa).

His-242 acts as the Proton acceptor in catalysis.

Belongs to the transferase hexapeptide repeat family. LpxD subfamily. As to quaternary structure, homotrimer.

The catalysed reaction is a UDP-3-O-[(3R)-3-hydroxyacyl]-alpha-D-glucosamine + a (3R)-hydroxyacyl-[ACP] = a UDP-2-N,3-O-bis[(3R)-3-hydroxyacyl]-alpha-D-glucosamine + holo-[ACP] + H(+). Its pathway is bacterial outer membrane biogenesis; LPS lipid A biosynthesis. Functionally, catalyzes the N-acylation of UDP-3-O-acylglucosamine using 3-hydroxyacyl-ACP as the acyl donor. Is involved in the biosynthesis of lipid A, a phosphorylated glycolipid that anchors the lipopolysaccharide to the outer membrane of the cell. The protein is UDP-3-O-acylglucosamine N-acyltransferase of Acinetobacter baumannii (strain AB307-0294).